We begin with the raw amino-acid sequence, 563 residues long: E3 ubiquitin-protein ligase IpaH2.5 (563 aa).

Residues 1-270 (MIKSTNIQVI…PDYSGPQIFF (270 aa)) form an interaction with target proteins region. 8 LRR repeats span residues 69-90 (LQNQEAELNLSELDLKTLPDLP), 91-115 (PQITTLEIRKNLLTHLPDLPPMLKV), 117-130 (HAQFNQLESLPALP), 131-150 (ETLEELNAGDNKIKELPFLP), 151-170 (ENLTHLRVHNNRLHILPLLP), 171-195 (PELKLLVVSGNRLDSIPPFPDKLEG), 197-209 (ALANNFIEQLPEL), and 210-233 (PFSMNRAVLMNNNLTTLPESVLRL). A linker region spans residues 271 to 281 (SMGNSATISAP). Positions 282–563 (EHSLADAVTA…YRQLTDEVLA (282 aa)) are E3 ubiquitin-protein ligase catalytic domain. One can recognise an NEL domain in the interval 284 to 563 (SLADAVTAWF…YRQLTDEVLA (280 aa)). Catalysis depends on Cys368, which acts as the Glycyl thioester intermediate.

The protein belongs to the LRR-containing bacterial E3 ligase family. As to quaternary structure, interacts with human RBCK1/HOIL-1 and RNF31/HOIP components of the LUBAC complex. Ubiquitinated in the presence of host E1 ubiquitin-activating enzyme, E2 ubiquitin-conjugating enzyme and ubiquitin.

The protein resides in the secreted. Its subcellular location is the host cytoplasm. The enzyme catalyses S-ubiquitinyl-[E2 ubiquitin-conjugating enzyme]-L-cysteine + [acceptor protein]-L-lysine = [E2 ubiquitin-conjugating enzyme]-L-cysteine + N(6)-ubiquitinyl-[acceptor protein]-L-lysine.. It functions in the pathway protein modification; protein ubiquitination. With respect to regulation, exists in an autoinhibited state in the absence of substrate protein, probably due to interactions of the leucine-rich repeat domain with the catalytic domain. Is activated upon binding to a substrate protein. In terms of biological role, E3 ubiquitin-protein ligase effector that inhibits host cell innate immunity during bacterial infection by catalyzing 'Lys-48'-linked polyubiquitination and subsequent degradation of host RNF31/HOIP. Host RNF31/HOIP is the catalytic component of the LUBAC complex, which conjugates linear ('Met-1'-linked) polyubiquitin chains at the surface of bacteria invading the host cytosol to form the ubiquitin coat surrounding bacteria. The bacterial ubiquitin coat acts as an 'eat-me' signal for xenophagy and promotes NF-kappa-B activation. This is E3 ubiquitin-protein ligase IpaH2.5 from Shigella flexneri.